Reading from the N-terminus, the 184-residue chain is Photosystem I assembly protein Ycf4 (184 aa).

2 consecutive transmembrane segments (helical) span residues 22–42 and 57–77; these read FCWA…GTSS and IIFF…LFIS.

The protein belongs to the Ycf4 family.

The protein resides in the plastid. The protein localises to the chloroplast thylakoid membrane. In terms of biological role, seems to be required for the assembly of the photosystem I complex. The sequence is that of Photosystem I assembly protein Ycf4 from Draba nemorosa (Woodland whitlowgrass).